The following is a 481-amino-acid chain: MQWETVIGLEVHVQLATKTKIFSGASTAFGAEPNTQACAIDLALPGTLPTPNAEAFRFATMFGLAVNAEIGKRSVFERKNYFYPDLPKGYQTTQLAEPIVGAGYVDLELEGGRTKRVRIHHAHLEEDAGKSLHEDFAGMSGIDLNRAGTPLIEVVTEPDMRSAEEAVAFAKKLHSIVTSLEICDGDMSQGSMRFDVNISVRPKGQEKFGTRTETKNLNSFKFMEEAIALEVERQIDVLEDGGKIIQETRLYNGDTKKARSMRSKEDSNDYRYFPCPDLLPVILDDDYIDAVRQQMPELPDARQARFIGQYALSSYDAGQLSADKLVAAFFEQTAQLSQDAKLSANWVLGELAAHLNKTEQRISNSTVTPELLAGLIARIKDGTLSSKIAKLVFEAICNGEGDADSIIDTRGLKQVSDTGALEKMIDEVIAKNPQQVDNYRNADDSKRPKMLGFFVGQVMKASQGQANPQALNELLLKKLNT.

This sequence belongs to the GatB/GatE family. GatB subfamily. In terms of assembly, heterotrimer of A, B and C subunits.

The enzyme catalyses L-glutamyl-tRNA(Gln) + L-glutamine + ATP + H2O = L-glutaminyl-tRNA(Gln) + L-glutamate + ADP + phosphate + H(+). It carries out the reaction L-aspartyl-tRNA(Asn) + L-glutamine + ATP + H2O = L-asparaginyl-tRNA(Asn) + L-glutamate + ADP + phosphate + 2 H(+). In terms of biological role, allows the formation of correctly charged Asn-tRNA(Asn) or Gln-tRNA(Gln) through the transamidation of misacylated Asp-tRNA(Asn) or Glu-tRNA(Gln) in organisms which lack either or both of asparaginyl-tRNA or glutaminyl-tRNA synthetases. The reaction takes place in the presence of glutamine and ATP through an activated phospho-Asp-tRNA(Asn) or phospho-Glu-tRNA(Gln). This Cellvibrio japonicus (strain Ueda107) (Pseudomonas fluorescens subsp. cellulosa) protein is Aspartyl/glutamyl-tRNA(Asn/Gln) amidotransferase subunit B.